A 280-amino-acid chain; its full sequence is 2,3,4,5-tetrahydropyridine-2,6-dicarboxylate N-succinyltransferase (280 aa).

Arginine 107 and aspartate 144 together coordinate substrate.

This sequence belongs to the transferase hexapeptide repeat family. Homotrimer.

The protein localises to the cytoplasm. The catalysed reaction is (S)-2,3,4,5-tetrahydrodipicolinate + succinyl-CoA + H2O = (S)-2-succinylamino-6-oxoheptanedioate + CoA. Its pathway is amino-acid biosynthesis; L-lysine biosynthesis via DAP pathway; LL-2,6-diaminopimelate from (S)-tetrahydrodipicolinate (succinylase route): step 1/3. The chain is 2,3,4,5-tetrahydropyridine-2,6-dicarboxylate N-succinyltransferase from Granulibacter bethesdensis (strain ATCC BAA-1260 / CGDNIH1).